We begin with the raw amino-acid sequence, 38 residues long: Mu-agatoxin-Hc1b (38 aa).

Intrachain disulfides connect Cys3–Cys19, Cys10–Cys24, Cys18–Cys34, and Cys26–Cys32. Ser38 is subject to Serine amide.

This sequence belongs to the neurotoxin 07 (Beta/delta-agtx) family. 02 (aga-3) subfamily. As to expression, expressed by the venom gland.

The protein localises to the secreted. Functionally, insecticidal neurotoxin that induces irreversible neuromuscular blockade in house crickets (A.domesticus). Modifies presynaptic voltage-gated sodium channels (Nav), causing them to open at the normal resting potential of the nerve. This leads to spontaneous release of neurotransmitter and repetitive action potentials in motor neurons. This Hololena curta (Funnel-web spider) protein is Mu-agatoxin-Hc1b.